Reading from the N-terminus, the 455-residue chain is Dihydrolipoyllysine-residue succinyltransferase component of 2-oxoglutarate dehydrogenase complex, mitochondrial (455 aa).

The transit peptide at 1 to 68 (MLSRSRCVSR…RFFRTTAVCK (68 aa)) directs the protein to the mitochondrion. In terms of domain architecture, Lipoyl-binding spans 71–145 (VITVKTPAFA…EGGTPLFTLR (75 aa)). Serine 82 bears the Phosphoserine mark. An N6-lipoyllysine modification is found at lysine 111. Over residues 153–173 (KAKPAEAPAAAAPKAEPAVSA) the composition is skewed to low complexity. Residues 153–214 (KAKPAEAPAA…KPTAAPPVAE (62 aa)) are disordered. Position 155 is an N6-acetyllysine (lysine 155). Over residues 174–195 (VPPPPAASIPTQMPPVPSPPQP) the composition is skewed to pro residues. Residues 221–453 (LRAEHREKMN…AVEDPRVLLL (233 aa)) form a catalytic region. 5 positions are modified to N6-acetyllysine: lysine 269, lysine 274, lysine 275, lysine 279, and lysine 309. Active-site residues include histidine 426 and aspartate 430.

Belongs to the 2-oxoacid dehydrogenase family. As to quaternary structure, the 2-oxoglutarate dehydrogenase complex is composed of OGDH (2-oxoglutarate dehydrogenase; E1), DLST (dihydrolipoamide succinyltransferase; E2), DLD (dihydrolipoamide dehydrogenase; E3) and the assembly factor KGD4. It contains multiple copies of the three enzymatic components (E1, E2 and E3). In the nucleus, the 2-oxoglutarate dehydrogenase complex associates with KAT2A. Interacts with ABHD11; this interaction maintains the functional lipoylation of the 2-oxoglutarate dehydrogenase complex. Requires (R)-lipoate as cofactor.

The protein resides in the mitochondrion matrix. The protein localises to the nucleus. The catalysed reaction is N(6)-[(R)-dihydrolipoyl]-L-lysyl-[protein] + succinyl-CoA = N(6)-[(R)-S(8)-succinyldihydrolipoyl]-L-lysyl-[protein] + CoA. It functions in the pathway amino-acid degradation; L-lysine degradation via saccharopine pathway; glutaryl-CoA from L-lysine: step 6/6. Its pathway is carbohydrate metabolism; tricarboxylic acid cycle. Functionally, dihydrolipoamide succinyltransferase (E2) component of the 2-oxoglutarate dehydrogenase complex. The 2-oxoglutarate dehydrogenase complex catalyzes the overall conversion of 2-oxoglutarate to succinyl-CoA and CO(2). The 2-oxoglutarate dehydrogenase complex is mainly active in the mitochondrion. A fraction of the 2-oxoglutarate dehydrogenase complex also localizes in the nucleus and is required for lysine succinylation of histones: associates with KAT2A on chromatin and provides succinyl-CoA to histone succinyltransferase KAT2A. The chain is Dihydrolipoyllysine-residue succinyltransferase component of 2-oxoglutarate dehydrogenase complex, mitochondrial from Sus scrofa (Pig).